Here is a 311-residue protein sequence, read N- to C-terminus: Methionyl-tRNA formyltransferase (311 aa).

A disordered region spans residues 33–52; the sequence is RPDRPAGRGRHQRSSPVREL. 110 to 113 contacts (6S)-5,6,7,8-tetrahydrofolate; sequence SLLP.

This sequence belongs to the Fmt family.

The enzyme catalyses L-methionyl-tRNA(fMet) + (6R)-10-formyltetrahydrofolate = N-formyl-L-methionyl-tRNA(fMet) + (6S)-5,6,7,8-tetrahydrofolate + H(+). Attaches a formyl group to the free amino group of methionyl-tRNA(fMet). The formyl group appears to play a dual role in the initiator identity of N-formylmethionyl-tRNA by promoting its recognition by IF2 and preventing the misappropriation of this tRNA by the elongation apparatus. The polypeptide is Methionyl-tRNA formyltransferase (Parafrankia sp. (strain EAN1pec)).